Consider the following 390-residue polypeptide: Large ribosomal subunit protein mL44 (390 aa).

Residues 1–59 constitute a mitochondrion transit peptide; the sequence is MGIVLKRAIAAGMKPFPNSTWHWSRTIRPFSQHLSSTCFLQQSSRFTSKRYLHLSTLTQ. Positions 139 to 205 constitute an RNase III domain; the sequence is AFVNTVPTNK…LAHIAKYWGI (67 aa). The DRBM domain maps to 302 to 372; sequence QPTRELAMLC…ATDALMKWYC (71 aa).

The protein belongs to the ribonuclease III family. Mitochondrion-specific ribosomal protein mL44 subfamily. As to quaternary structure, component of the mitochondrial large ribosomal subunit (mt-LSU). Mature yeast 74S mitochondrial ribosomes consist of a small (37S) and a large (54S) subunit. The 37S small subunit contains a 15S ribosomal RNA (15S mt-rRNA) and 34 different proteins. The 54S large subunit contains a 21S rRNA (21S mt-rRNA) and 46 different proteins. mL44 forms a heterodimer with mL57 and stabilizes rRNA expansion segments 1/2 at a membrane-facing protuberance close to the point of attachment of the ribosome to the translocon in the membrane.

The protein resides in the mitochondrion. Functionally, component of the mitochondrial ribosome (mitoribosome), a dedicated translation machinery responsible for the synthesis of mitochondrial genome-encoded proteins, including at least some of the essential transmembrane subunits of the mitochondrial respiratory chain. The mitoribosomes are attached to the mitochondrial inner membrane and translation products are cotranslationally integrated into the membrane. The polypeptide is Large ribosomal subunit protein mL44 (MRPL3) (Saccharomyces cerevisiae (strain ATCC 204508 / S288c) (Baker's yeast)).